Consider the following 282-residue polypeptide: Undecaprenyl-diphosphatase (282 aa).

Helical transmembrane passes span 90–110 (YRLG…GLLF), 121–141 (LWVV…AEYL), 165–185 (LALV…LFLG), 194–214 (FGFL…LPDA), 228–248 (QLLV…SWFL), and 256–276 (MYWF…LLAT).

It belongs to the UppP family.

The protein localises to the cell membrane. The enzyme catalyses di-trans,octa-cis-undecaprenyl diphosphate + H2O = di-trans,octa-cis-undecaprenyl phosphate + phosphate + H(+). Catalyzes the dephosphorylation of undecaprenyl diphosphate (UPP). Confers resistance to bacitracin. This is Undecaprenyl-diphosphatase from Mycobacterium marinum (strain ATCC BAA-535 / M).